The sequence spans 449 residues: Ribosomal protein uS12 methylthiotransferase RimO (449 aa).

The region spanning 16 to 126 (PKISFVSLGC…VMEAVHAAIA (111 aa)) is the MTTase N-terminal domain. Residues Cys-25, Cys-61, Cys-90, Cys-157, Cys-161, and Cys-164 each coordinate [4Fe-4S] cluster. Residues 143–381 (LTPRHYAYLK…MEHQQKISAR (239 aa)) enclose the Radical SAM core domain. One can recognise a TRAM domain in the interval 384-449 (REKIGKHVSV…DAYDLHGKAV (66 aa)).

It belongs to the methylthiotransferase family. RimO subfamily. [4Fe-4S] cluster is required as a cofactor.

It localises to the cytoplasm. It carries out the reaction L-aspartate(89)-[ribosomal protein uS12]-hydrogen + (sulfur carrier)-SH + AH2 + 2 S-adenosyl-L-methionine = 3-methylsulfanyl-L-aspartate(89)-[ribosomal protein uS12]-hydrogen + (sulfur carrier)-H + 5'-deoxyadenosine + L-methionine + A + S-adenosyl-L-homocysteine + 2 H(+). Functionally, catalyzes the methylthiolation of an aspartic acid residue of ribosomal protein uS12. The polypeptide is Ribosomal protein uS12 methylthiotransferase RimO (Beijerinckia indica subsp. indica (strain ATCC 9039 / DSM 1715 / NCIMB 8712)).